Reading from the N-terminus, the 619-residue chain is 1-deoxy-D-xylulose-5-phosphate synthase (619 aa).

Residues H74 and 115–117 (GHS) contribute to the thiamine diphosphate site. Position 146 (D146) interacts with Mg(2+). Residues 147-148 (GA), N175, Y285, and E365 each bind thiamine diphosphate. Mg(2+) is bound at residue N175.

The protein belongs to the transketolase family. DXPS subfamily. Homodimer. It depends on Mg(2+) as a cofactor. Thiamine diphosphate is required as a cofactor.

The enzyme catalyses D-glyceraldehyde 3-phosphate + pyruvate + H(+) = 1-deoxy-D-xylulose 5-phosphate + CO2. The protein operates within metabolic intermediate biosynthesis; 1-deoxy-D-xylulose 5-phosphate biosynthesis; 1-deoxy-D-xylulose 5-phosphate from D-glyceraldehyde 3-phosphate and pyruvate: step 1/1. Its function is as follows. Catalyzes the acyloin condensation reaction between C atoms 2 and 3 of pyruvate and glyceraldehyde 3-phosphate to yield 1-deoxy-D-xylulose-5-phosphate (DXP). This chain is 1-deoxy-D-xylulose-5-phosphate synthase, found in Clostridium perfringens (strain SM101 / Type A).